A 359-amino-acid chain; its full sequence is MEGDVGIGLVCQNTMDGKASNGNGLEKTVPSCCLKAMACVPEDDAKCHSTVVSGWFSEPHPRSGKKGGKAVYFNNPMWPGEAHSLKVEKVLFKDKSDFQEVLVFESATYGKVLVLDGIVQLTEKDECAYQEMIAHLPLCSISSPKNVLVVGGGDGGVLREISRHSSVEVIDICEIDKMVIDVSKKFFPELAVGFDDPRVQLHIGDAAEFLRKSPEGKYDAIIVDSSDPVGPALALVEKPFFETLARALKPGGVLCNMAESMWLHTHLIEDMISICRQTFKSVHYAWSSVPTYPSGVIGFVLCSTEGPAVDFKNPINPIEKLDGAMTHKRELKFYNSDMHRAAFALPTFLRREVASLLAS.

In terms of domain architecture, PABS spans serine 53–threonine 304. Glutamine 99 is an S-adenosyl 3-(methylsulfanyl)propylamine binding site. Tyrosine 129 is a binding site for spermidine. Glutamine 130 serves as a coordination point for S-adenosyl 3-(methylsulfanyl)propylamine. Spermidine is bound at residue aspartate 154. S-adenosyl 3-(methylsulfanyl)propylamine contacts are provided by residues glutamate 174 and aspartate 205–alanine 206. Aspartate 224 (proton acceptor) is an active-site residue. Tyrosine 292 is a putrescine binding site.

It belongs to the spermidine/spermine synthase family. Heterodimer. Component of a multiprotein complex. Interacts with SPDSYN1 and SPDSYN2. Expressed predominantly in stem internodes, flower buds and roots.

The enzyme catalyses S-adenosyl 3-(methylsulfanyl)propylamine + spermidine = spermine + S-methyl-5'-thioadenosine + H(+). It functions in the pathway amine and polyamine biosynthesis; spermine biosynthesis; spermine from spermidine: step 1/1. The chain is Spermine synthase (SPMS) from Arabidopsis thaliana (Mouse-ear cress).